Consider the following 396-residue polypeptide: MSEFIAENRGANAITRPNWSAVFSVAFCVACLIIVEFLPVSLLTPMAQDLGISEGVAGQSVTVTAFVAMFASLFITQTIQATDRRYVVILFAVLLTLSCLLVSFANSFSLLLIGRACLGVALGGFWAISASLTMRLVPPRTVPKALSVIFGAVSIALVIAAPLGSFLGELIGWRNVFNAAAAMGVLCIFWIIKSLPSLPGEPSHQKQNTFRLLQRPGVMAGMIAIFMSFAGQFAFFTYIRPVYMNLAGFGVDGLTLVLLSFGIASFVGTSLSSFILKRSVKLALAGAPFVLALSALVLTLWGSDKIVATGVAIIWGLTFALIPVGWSTWITRSLADQAEKAGSIQVAVIQLANTCGAAIGGYALDNIGLTSPLMLSGTLMLLTALLVTAKVKMKKS.

The Cytoplasmic portion of the chain corresponds to 1–21 (MSEFIAENRGANAITRPNWSA). Residues 22 to 42 (VFSVAFCVACLIIVEFLPVSL) traverse the membrane as a helical segment. Residues 43–54 (LTPMAQDLGISE) lie on the Periplasmic side of the membrane. A helical transmembrane segment spans residues 55–75 (GVAGQSVTVTAFVAMFASLFI). Residues 76–85 (TQTIQATDRR) lie on the Cytoplasmic side of the membrane. The helical transmembrane segment at 86-106 (YVVILFAVLLTLSCLLVSFAN) threads the bilayer. A topological domain (periplasmic) is located at residue Ser-107. A helical membrane pass occupies residues 108 to 128 (FSLLLIGRACLGVALGGFWAI). Topologically, residues 129–147 (SASLTMRLVPPRTVPKALS) are cytoplasmic. The helical transmembrane segment at 148–168 (VIFGAVSIALVIAAPLGSFLG) threads the bilayer. At 169–175 (ELIGWRN) the chain is on the periplasmic side. A helical transmembrane segment spans residues 176 to 196 (VFNAAAAMGVLCIFWIIKSLP). The Cytoplasmic portion of the chain corresponds to 197–215 (SLPGEPSHQKQNTFRLLQR). Residues 216 to 236 (PGVMAGMIAIFMSFAGQFAFF) traverse the membrane as a helical segment. The Periplasmic segment spans residues 237 to 255 (TYIRPVYMNLAGFGVDGLT). The chain crosses the membrane as a helical span at residues 256–276 (LVLLSFGIASFVGTSLSSFIL). At 277–281 (KRSVK) the chain is on the cytoplasmic side. Residues 282–302 (LALAGAPFVLALSALVLTLWG) traverse the membrane as a helical segment. The Periplasmic segment spans residues 303-305 (SDK). A helical membrane pass occupies residues 306–326 (IVATGVAIIWGLTFALIPVGW). At 327–343 (STWITRSLADQAEKAGS) the chain is on the cytoplasmic side. A helical membrane pass occupies residues 344 to 364 (IQVAVIQLANTCGAAIGGYAL). Residues 365-366 (DN) lie on the Periplasmic side of the membrane. Residues 367–387 (IGLTSPLMLSGTLMLLTALLV) form a helical membrane-spanning segment. Over 388 to 396 (TAKVKMKKS) the chain is Cytoplasmic.

Belongs to the major facilitator superfamily. DHA1 family. NepI (TC 2.A.1.2.26) subfamily.

Its subcellular location is the cell inner membrane. It catalyses the reaction inosine(in) + H(+)(out) = inosine(out) + H(+)(in). The enzyme catalyses guanosine(in) + H(+)(out) = guanosine(out) + H(+)(in). In terms of biological role, involved in the efflux of purine ribonucleosides, such as inosine and guanosine. The protein is Purine ribonucleoside efflux pump NepI of Escherichia coli O6:K15:H31 (strain 536 / UPEC).